A 138-amino-acid polypeptide reads, in one-letter code: Acidic phospholipase A2 homolog sistruxin A (138 aa).

Residues 1 to 37 (MRALWIVAVLLLGVEGSLVEFETLIMKIAGRSGVWYY) form the signal peptide. Disulfide bonds link C42–C131, C44–C60, C59–C111, C65–C138, C66–C104, C73–C97, and C91–C102. Positions 78–83 (DVYTYR) are excised as a propeptide. Pyrrolidone carboxylic acid is present on Q84. Residues 119–124 (YNHKYW) constitute a propeptide that is removed on maturation.

It belongs to the phospholipase A2 family. Group II subfamily. D49 sub-subfamily. Heterodimer of an acidic subunit and a basic chain. The acidic subunit is non-toxic, without enzymatic activity and comprises 3 peptides that are cross-linked by 7 disulfide bridges. The basic subunit is toxic, has phospholipase A2 activity and is composed of a single chain. In terms of tissue distribution, expressed by the venom gland.

It localises to the secreted. In terms of biological role, snake venom phospholipase A2 (PLA2) that inhibits neuromuscular transmission by blocking acetylcholine release from the nerve termini. This is Acidic phospholipase A2 homolog sistruxin A from Sistrurus tergeminus (Western massasauga).